Consider the following 422-residue polypeptide: Transcription termination factor Rho (422 aa).

The Rho RNA-BD domain maps to Glu52 to Asp127. Residues Gly173–Gly178, Arg185–Val190, and Arg216 contribute to the ATP site.

The protein belongs to the Rho family. As to quaternary structure, homohexamer. The homohexamer assembles into an open ring structure.

In terms of biological role, facilitates transcription termination by a mechanism that involves Rho binding to the nascent RNA, activation of Rho's RNA-dependent ATPase activity, and release of the mRNA from the DNA template. The protein is Transcription termination factor Rho of Cereibacter sphaeroides (strain ATCC 17023 / DSM 158 / JCM 6121 / CCUG 31486 / LMG 2827 / NBRC 12203 / NCIMB 8253 / ATH 2.4.1.) (Rhodobacter sphaeroides).